A 463-amino-acid chain; its full sequence is Lariat debranching enzyme (463 aa).

Cys8, His10, Asp33, and Asn78 together coordinate a divalent metal cation. Residues 118–148 (SGIYSAMDYKKGRYEGLPYNYKMLKSIYHTR) form a lariat recognition loop region. His168, His220, and His222 together coordinate a divalent metal cation. The interval 250-324 (SGFSMKGLNE…QVTKFLALDK (75 aa)) is disordered. The span at 256–267 (GLNEPSQERLPV) shows a compositional bias: polar residues. 2 stretches are compositionally biased toward basic and acidic residues: residues 276–289 (DEEG…EKQD) and 299–323 (CRKE…LALD).

It belongs to the lariat debranching enzyme family. It depends on Fe(2+) as a cofactor. Zn(2+) is required as a cofactor. Mn(2+) serves as cofactor.

It is found in the nucleus. The protein localises to the cytoplasm. Active in presence of diverse metals including Fe(2+), Zn(2+) and Mn(2+). Binds two metal cations in two adjacent alpha and beta metal-binding pockets. Functionally, cleaves the 2'-5' phosphodiester linkage at the branch point of lariat intron pre-mRNAs after splicing and converts them into linear molecules that are subsequently degraded, thereby facilitating ribonucleotide turnover. The sequence is that of Lariat debranching enzyme (dbr1) from Schizosaccharomyces pombe (strain 972 / ATCC 24843) (Fission yeast).